The following is a 55-amino-acid chain: Sec-independent protein translocase protein TatA (55 aa).

A helical transmembrane segment spans residues 1-21; the sequence is MGMSFSHLLIVLLIIFVLFGA.

Belongs to the TatA/E family. As to quaternary structure, the Tat system comprises two distinct complexes: a TatABC complex, containing multiple copies of TatA, TatB and TatC subunits, and a separate TatA complex, containing only TatA subunits. Substrates initially bind to the TatABC complex, which probably triggers association of the separate TatA complex to form the active translocon.

The protein localises to the cell inner membrane. Its function is as follows. Part of the twin-arginine translocation (Tat) system that transports large folded proteins containing a characteristic twin-arginine motif in their signal peptide across membranes. TatA could form the protein-conducting channel of the Tat system. The sequence is that of Sec-independent protein translocase protein TatA from Rickettsia peacockii (strain Rustic).